A 257-amino-acid polypeptide reads, in one-letter code: 4-hydroxy-tetrahydrodipicolinate reductase (257 aa).

NAD(+) contacts are provided by residues 11 to 16 and glutamate 37; that span reads GANGRM. Residue arginine 38 participates in NADP(+) binding. Residues 86-88 and 110-113 each bind NAD(+); these read GST and SGNY. Catalysis depends on histidine 144, which acts as the Proton donor/acceptor. Histidine 145 provides a ligand contact to (S)-2,3,4,5-tetrahydrodipicolinate. Lysine 148 (proton donor) is an active-site residue. 154-155 is a (S)-2,3,4,5-tetrahydrodipicolinate binding site; that stretch reads GT.

This sequence belongs to the DapB family.

It localises to the cytoplasm. The enzyme catalyses (S)-2,3,4,5-tetrahydrodipicolinate + NAD(+) + H2O = (2S,4S)-4-hydroxy-2,3,4,5-tetrahydrodipicolinate + NADH + H(+). The catalysed reaction is (S)-2,3,4,5-tetrahydrodipicolinate + NADP(+) + H2O = (2S,4S)-4-hydroxy-2,3,4,5-tetrahydrodipicolinate + NADPH + H(+). Its pathway is amino-acid biosynthesis; L-lysine biosynthesis via DAP pathway; (S)-tetrahydrodipicolinate from L-aspartate: step 4/4. Its function is as follows. Catalyzes the conversion of 4-hydroxy-tetrahydrodipicolinate (HTPA) to tetrahydrodipicolinate. The chain is 4-hydroxy-tetrahydrodipicolinate reductase from Caulobacter vibrioides (strain ATCC 19089 / CIP 103742 / CB 15) (Caulobacter crescentus).